The chain runs to 3902 residues: Hybrid PKS-NRPS synthetase pynA (3902 aa).

A disordered region spans residues 1 to 25 (MDTPLSSSEISPRFSNTVPSSVSSM). The region spanning 29–441 (ADPSVIVGLA…GTNAHVILDA (413 aa)) is the Ketosynthase family 3 (KS3) domain. Residues C201, H324, and H362 each act as for beta-ketoacyl synthase activity in the active site. The segment at 555 to 868 (VFTGQGAQWF…PYLASLTRGV (314 aa)) is malonyl-CoA:ACP transacylase (MAT) domain. Residue S647 is the For malonyltransferase activity of the active site. The interval 945–1080 (HSILGARMPG…GLVSVETNAL (136 aa)) is N-terminal hotdog fold. The segment at 945-1256 (HSILGARMPG…LEVTALGSDK (312 aa)) is dehydratase (DH) domain. One can recognise a PKS/mFAS DH domain in the interval 945–1258 (HSILGARMPG…VTALGSDKTD (314 aa)). H977 (proton acceptor; for dehydratase activity) is an active-site residue. The tract at residues 1100-1258 (QESIPAETLY…VTALGSDKTD (159 aa)) is C-terminal hotdog fold. The active-site Proton donor; for dehydratase activity is D1164. Residues 1629–1945 (GLLETLVFED…MGKHTGKVVL (317 aa)) are enoyl reductase (ER) domain. The ketoreductase (KR) domain stretch occupies residues 1971 to 2143 (TYLLVGGLGG…AGTTMNCGMI (173 aa)). One can recognise a Carrier 1 domain in the interval 2251–2328 (ERTTLVLSAF…ALVTKASGLI (78 aa)). An O-(pantetheine 4'-phosphoryl)serine modification is found at S2288. A compositionally biased stretch (basic and acidic residues) spans 2337 to 2350 (KAENVDNEGAKGNE). Positions 2337–2364 (KAENVDNEGAKGNEDQEVETQQGQLNQP) are disordered. Residues 2374–2816 (VPMSSFQQRL…AEVNLCGALE (443 aa)) are condensation (C) domain 7. The segment at 2836-3248 (SVGVCQRIME…NGLLTFKGRI (413 aa)) is adenylation (A) domain 8. The 77-residue stretch at 3391-3467 (GDDAEILQGV…AIAGMIQKQL (77 aa)) folds into the Carrier 2 domain. S3427 carries the O-(pantetheine 4'-phosphoryl)serine modification. A thioesterase (TE) domain region spans residues 3515-3774 (LTGIDTFIGL…VDFLPVDALT (260 aa)).

It in the C-terminal section; belongs to the NRP synthetase family.

It participates in secondary metabolite biosynthesis. Functionally, hybrid PKS-NRPS synthetase; part of the gene cluster that mediates the biosynthesis of pyranonigrins, a family of antioxidative compounds. The first step of pyranonigrins biosynthesis is performed by the hybrid PKS-NRPS synthetase that condenses 6 malonyl-CoA units to an acetyl starter unit, to form a 1,3,5-trioxotetradecane-6,8-dienyl-ACP. The enoyl reductase (ER) domain of pynA is likely to be functional during the first two rounds of polyketide chain extension, to generate the saturated C-C bonds of the alkyl side chain. PynA subsequently forms the amide bond between the acyl chain and L-serine. Although pynA has a terminal reductase domain, it appears to require the thioesterase pynI for the release of the straight-chain intermediate from pynA via the formation of a tetramic acid pyranonigrin J. The methyltransferase pynC then coverts pyranonigrin J to pyranonigrin I via N-methylation. The FAD-dependent monooxygenase pynG catalyzes an epoxidation-mediated cyclization to form the dihydro-gamma-pyrone moiety, followed by pynD-catalyzed oxidation of the alcohol to the ketone and enolization to yield the characteristic tetramic acid-fused gamma-pyrone core of pyranonigrin H. Pyranonigrin H is substrate of pynH for dehydration-mediated exo-methylene formation from the serine side chain to produce pyranonigrin E, before the oxidase pynE reduces the exo-methylene of pyranonigrin E into a pendant methyl to form pyranonigrin G. The FAD-linked oxidoreductase pynB performs the reverse reaction and converts pyranonigrin G back to pyranonigrin E. This chain is Hybrid PKS-NRPS synthetase pynA, found in Aspergillus niger (strain ATCC MYA-4892 / CBS 513.88 / FGSC A1513).